The primary structure comprises 179 residues: Large ribosomal subunit protein uL5 (179 aa).

Belongs to the universal ribosomal protein uL5 family. Part of the 50S ribosomal subunit; part of the 5S rRNA/L5/L18/L25 subcomplex. Contacts the 5S rRNA and the P site tRNA. Forms a bridge to the 30S subunit in the 70S ribosome.

Functionally, this is one of the proteins that bind and probably mediate the attachment of the 5S RNA into the large ribosomal subunit, where it forms part of the central protuberance. In the 70S ribosome it contacts protein S13 of the 30S subunit (bridge B1b), connecting the 2 subunits; this bridge is implicated in subunit movement. Contacts the P site tRNA; the 5S rRNA and some of its associated proteins might help stabilize positioning of ribosome-bound tRNAs. The polypeptide is Large ribosomal subunit protein uL5 (Verminephrobacter eiseniae (strain EF01-2)).